The following is a 565-amino-acid chain: MTVPSDLDISRATALRPLEDIAAQLGLGPHLLEPYGHNVAKISLDAIEELSDRPQARYVVVSAITPTPLGEGKTTTTVGLGQALRHLGKVSAVAVRQPSMGPTFGIKGGAAGGGYSQVVPMEALNLHLTGDMHAVTAAHNLLSAMLDNHLHKGNRLGVDPHRITWRRVLDVNDRDLRNIVTGMGGRADGTPRQTGFDITAASEVMAVLALSTSLRDMRRRLGRIVVGYTRDGSPVTAEDLRAAGAMTAIMREAIKPNLMQTTENTPVLVHAGPFGNIAHGNSSVVADRIAGRCADYLVTEAGFGADMGAERFFNIKCRTSGMRPDAAVLVATVRALKAHSGRYKVVAGRPLPPEMLAENPDDVLAGAENLRKQIDNIRLHGVSPVVAVNAFPTDHGSEHDAIRRVAEEEGARVAVSNHYSEGGKGALELAEVVVEAAEEPNRFRLLYPDSADLRTKIETIATRVYGADGVSYQPAAARALADYEAIGFGSLPVCIAKTHLSLSSDPSLLGAPTGWTLPVREVRASIGAGFIYAICGEMRTMPGLGSHPAAERIDIDEHGQIVGLS.

67–74 (TPLGEGKT) is a binding site for ATP.

It belongs to the formate--tetrahydrofolate ligase family.

It carries out the reaction (6S)-5,6,7,8-tetrahydrofolate + formate + ATP = (6R)-10-formyltetrahydrofolate + ADP + phosphate. It functions in the pathway one-carbon metabolism; tetrahydrofolate interconversion. The protein is Formate--tetrahydrofolate ligase of Saccharopolyspora erythraea (strain ATCC 11635 / DSM 40517 / JCM 4748 / NBRC 13426 / NCIMB 8594 / NRRL 2338).